Consider the following 440-residue polypeptide: MSNIDETENQEYLLLKAKNIITERTQSSYLPDEYIGAEKEAETLYAILDDAIINKKSTVGLITGPKGSGKSSFFKHCLKKYNESDYLLVRLSGMIHFNDNYALKEIAKALGIKIPSGLNIFHTFEFIRVKLGKETLESQINTSTKKIQFQSLPVVILIEELELMLTSLSTSKQSLFYNLLDLSHYKNVSLSFIATTSQHDIVNMFEKRIKSRFTQESIKIPPLSFDSIQIIFKNLISLPESFDDEEYRDTWNANVEKSLKSTSVIENFKKYYRLYNRVNNYHLLVNEIIDNLDYYDKDNKWINSKIINDGFEYLNQDVIEIMLKSLSVLEFTILGCILNTKVGTNINDDYITFDELYDGEYKKLSYSFFKNVDQAKKPSTIRILQHLLLLGIIKTQSRANDSGDFPKFKIAIDPDSIINAAKNRNDLPTVIVKYVTEWLT.

64-71 is a binding site for ATP; sequence GPKGSGKS.

Belongs to the ORC4 family. As to quaternary structure, ORC is composed of six subunits.

It localises to the nucleus. Its function is as follows. Component of the origin recognition complex (ORC) that binds origins of replication. DNA-binding is ATP-dependent, however specific DNA sequences that define origins of replication have not been identified so far. ORC is required to assemble the pre-replication complex necessary to initiate DNA replication. The protein is Origin recognition complex subunit 4 (orcD) of Dictyostelium discoideum (Social amoeba).